The primary structure comprises 284 residues: Large ribosomal subunit protein uL2 (284 aa).

The segment at arginine 232 to lysine 284 is disordered. A compositionally biased stretch (basic and acidic residues) spans aspartate 240–histidine 250. Positions lysine 264–lysine 284 are enriched in basic residues.

The protein belongs to the universal ribosomal protein uL2 family. In terms of assembly, part of the 50S ribosomal subunit. Forms a bridge to the 30S subunit in the 70S ribosome.

Functionally, one of the primary rRNA binding proteins. Required for association of the 30S and 50S subunits to form the 70S ribosome, for tRNA binding and peptide bond formation. It has been suggested to have peptidyltransferase activity; this is somewhat controversial. Makes several contacts with the 16S rRNA in the 70S ribosome. This chain is Large ribosomal subunit protein uL2, found in Chlamydia felis (strain Fe/C-56) (Chlamydophila felis).